We begin with the raw amino-acid sequence, 445 residues long: N-succinylarginine dihydrolase (445 aa).

Substrate is bound by residues 19 to 28 (AGLSFGNVAS), Asn110, and 137 to 138 (HR). Glu174 is a catalytic residue. Arg214 is a binding site for substrate. The active site involves His250. Substrate is bound by residues Asp252 and Asn363. The active-site Nucleophile is the Cys369.

The protein belongs to the succinylarginine dihydrolase family. Homodimer.

It catalyses the reaction N(2)-succinyl-L-arginine + 2 H2O + 2 H(+) = N(2)-succinyl-L-ornithine + 2 NH4(+) + CO2. The protein operates within amino-acid degradation; L-arginine degradation via AST pathway; L-glutamate and succinate from L-arginine: step 2/5. Its function is as follows. Catalyzes the hydrolysis of N(2)-succinylarginine into N(2)-succinylornithine, ammonia and CO(2). The polypeptide is N-succinylarginine dihydrolase (Shewanella piezotolerans (strain WP3 / JCM 13877)).